The following is a 151-amino-acid chain: Transcription elongation factor Spt5 (151 aa).

In terms of domain architecture, KOW spans 98–128 (PGQVVEIVAGAFKGMKARVIDVNQSKGQVTV).

Belongs to the archaeal Spt5 family. In terms of assembly, heterodimer composed of Spt4 and Spt5. Interacts with RNA polymerase (RNAP).

Stimulates transcription elongation. This is Transcription elongation factor Spt5 from Aeropyrum pernix (strain ATCC 700893 / DSM 11879 / JCM 9820 / NBRC 100138 / K1).